Reading from the N-terminus, the 346-residue chain is Flap endonuclease 1 (346 aa).

The segment at 1 to 102 is N-domain; the sequence is MGVTELGKLI…AEIEERRKTR (102 aa). Positions 31, 84, 156, 158, 177, 179, and 239 each coordinate Mg(2+). The interval 120–261 is I-domain; the sequence is DVAKYAKRAV…KALKLIWEFG (142 aa).

This sequence belongs to the XPG/RAD2 endonuclease family. FEN1 subfamily. Interacts with PCNA. PCNA stimulates the nuclease activity without altering cleavage specificity. The cofactor is Mg(2+).

In terms of biological role, structure-specific nuclease with 5'-flap endonuclease and 5'-3' exonuclease activities involved in DNA replication and repair. During DNA replication, cleaves the 5'-overhanging flap structure that is generated by displacement synthesis when DNA polymerase encounters the 5'-end of a downstream Okazaki fragment. Binds the unpaired 3'-DNA end and kinks the DNA to facilitate 5' cleavage specificity. Cleaves one nucleotide into the double-stranded DNA from the junction in flap DNA, leaving a nick for ligation. Also involved in the base excision repair (BER) pathway. Acts as a genome stabilization factor that prevents flaps from equilibrating into structures that lead to duplications and deletions. Also possesses 5'-3' exonuclease activity on nicked or gapped double-stranded DNA. The sequence is that of Flap endonuclease 1 from Pyrobaculum aerophilum (strain ATCC 51768 / DSM 7523 / JCM 9630 / CIP 104966 / NBRC 100827 / IM2).